Reading from the N-terminus, the 64-residue chain is Gallinacin-2 (64 aa).

The signal sequence occupies residues 1-22 (MRILYLLFSLLFLALQVSPGLS). The propeptide occupies 23 to 28 (SPRRDM). 3 disulfide bridges follow: Cys31–Cys57, Cys36–Cys51, and Cys41–Cys58.

As to expression, expressed in circulating heterophil granulocytes and bone marrow (at protein level). Strong expression in the bone marrow, lung and testis. Moderate expression in the bursa and intestine. Low expression in the cloaca, gall bladder, brain, pancreas, trachea, air sacs and spleen. Expressed in the vagina, ovarian stroma and the theca layer of the ovarian follicle, but not in the granulosa layer of the ovarian follicle.

It localises to the secreted. It is found in the cytoplasmic granule. Functionally, potent antibacterial activity against the Gram-negative bacterium E.coli ML-35, and against the Gram-positive bacterium L.monocytogenes EGD. Lacks antifungal activity against C.albicans. This chain is Gallinacin-2 (GAL2), found in Gallus gallus (Chicken).